The primary structure comprises 433 residues: GTPase Der (433 aa).

2 EngA-type G domains span residues 3–167 (KIVS…DKNI) and 175–349 (PRIA…FNLR). GTP-binding positions include 9–16 (GRPNVGKS), 56–60 (DTGGY), 119–122 (NKID), 181–188 (GRPNVGKS), 228–232 (DTAGI), and 293–296 (NKWD). In terms of domain architecture, KH-like spans 350-433 (LRIKTSLLNK…IPIKILFRLK (84 aa)).

The protein belongs to the TRAFAC class TrmE-Era-EngA-EngB-Septin-like GTPase superfamily. EngA (Der) GTPase family. Associates with the 50S ribosomal subunit.

Functionally, GTPase that plays an essential role in the late steps of ribosome biogenesis. The polypeptide is GTPase Der (Karelsulcia muelleri (strain GWSS) (Sulcia muelleri)).